A 266-amino-acid chain; its full sequence is HLA class II histocompatibility antigen, DR beta 4 chain (266 aa).

Residues 1–29 form the signal peptide; the sequence is MVCLKLPGGSCMAALTVTLTVLSSPLALA. The beta-1 stretch occupies residues 30–124; the sequence is GDTQPRFLEQ…VESFTVQRRV (95 aa). Over 30–227 the chain is Extracellular; that stretch reads GDTQPRFLEQ…SARSESAQSK (198 aa). 2 disulfides stabilise this stretch: cysteine 44–cysteine 108 and cysteine 146–cysteine 202. Asparagine 48 is a glycosylation site (N-linked (GlcNAc...) asparagine). Residues 125 to 227 form a beta-2 region; sequence QPKVTVYPSK…SARSESAQSK (103 aa). The 91-residue stretch at 126–216 folds into the Ig-like C1-type domain; it reads PKVTVYPSKT…PSMMSPLTVQ (91 aa). The helical transmembrane segment at 228-250 threads the bilayer; it reads MLSGVGGFVLGLLFLGTGLFIYF. Residues 251 to 266 are Cytoplasmic-facing; the sequence is RNQKGHSGLQPTGLLS. A Glycyl lysine isopeptide (Lys-Gly) (interchain with G-Cter in ubiquitin) cross-link involves residue lysine 254.

This sequence belongs to the MHC class II family. Heterodimer of an alpha and a beta subunit; also referred as MHC class II molecule. In the endoplasmic reticulum (ER) it forms a heterononamer; 3 MHC class II molecules bind to a CD74 homotrimer (also known as invariant chain or HLA class II histocompatibility antigen gamma chain). In the endosomal/lysosomal system; CD74 undergoes sequential degradation by various proteases; leaving a small fragment termed CLIP on each MHC class II molecule. MHC class II molecule interacts with HLA_DM, and HLA_DO in B-cells, in order to release CLIP and facilitate the binding of antigenic peptides. Ubiquitinated by MARCH1 and MARCH8 at Lys-254 leading to sorting into the endosome system and down-regulation of MHC class II. When associated with ubiquitination of the alpha subunit of HLA-DR: HLA-DRA 'Lys-244', the down-regulation of MHC class II may be highly effective.

It localises to the cell membrane. Its subcellular location is the endoplasmic reticulum membrane. It is found in the golgi apparatus. The protein localises to the trans-Golgi network membrane. The protein resides in the endosome membrane. It localises to the lysosome membrane. Its subcellular location is the late endosome membrane. Binds peptides derived from antigens that access the endocytic route of antigen presenting cells (APC) and presents them on the cell surface for recognition by the CD4 T-cells. The peptide binding cleft accommodates peptides of 10-30 residues. The peptides presented by MHC class II molecules are generated mostly by degradation of proteins that access the endocytic route, where they are processed by lysosomal proteases and other hydrolases. Exogenous antigens that have been endocytosed by the APC are thus readily available for presentation via MHC II molecules, and for this reason this antigen presentation pathway is usually referred to as exogenous. As membrane proteins on their way to degradation in lysosomes as part of their normal turn-over are also contained in the endosomal/lysosomal compartments, exogenous antigens must compete with those derived from endogenous components. Autophagy is also a source of endogenous peptides, autophagosomes constitutively fuse with MHC class II loading compartments. In addition to APCs, other cells of the gastrointestinal tract, such as epithelial cells, express MHC class II molecules and CD74 and act as APCs, which is an unusual trait of the GI tract. To produce a MHC class II molecule that presents an antigen, three MHC class II molecules (heterodimers of an alpha and a beta chain) associate with a CD74 trimer in the ER to form a heterononamer. Soon after the entry of this complex into the endosomal/lysosomal system where antigen processing occurs, CD74 undergoes a sequential degradation by various proteases, including CTSS and CTSL, leaving a small fragment termed CLIP (class-II-associated invariant chain peptide). The removal of CLIP is facilitated by HLA-DM via direct binding to the alpha-beta-CLIP complex so that CLIP is released. HLA-DM stabilizes MHC class II molecules until primary high affinity antigenic peptides are bound. The MHC II molecule bound to a peptide is then transported to the cell membrane surface. In B-cells, the interaction between HLA-DM and MHC class II molecules is regulated by HLA-DO. Primary dendritic cells (DCs) also to express HLA-DO. Lysosomal microenvironment has been implicated in the regulation of antigen loading into MHC II molecules, increased acidification produces increased proteolysis and efficient peptide loading. The sequence is that of HLA class II histocompatibility antigen, DR beta 4 chain (HLA-DRB4) from Homo sapiens (Human).